Here is a 133-residue protein sequence, read N- to C-terminus: Minor capsid protein VP2 (133 aa).

The protein belongs to the vesivirus VP2 protein family. Homooligomer. The portal-like structure consists in 12 copies of VP2. Interacts with capsid protein VP1.

The protein localises to the virion. It is found in the host cytoplasm. Minor structural protein that forms a portal-like structure at a unique three-fold axis of symmetry, following binding to the host receptor. The channel formed by VP2 may allow the delivery of the viral genome through the host endosomal membrane. The sequence is that of Minor capsid protein VP2 from Canis lupus familiaris (Dog).